We begin with the raw amino-acid sequence, 862 residues long: Aldehyde-alcohol dehydrogenase (862 aa).

Cys-244 is a catalytic residue. NAD(+) is bound at residue 420–425 (GFWGGN).

It in the N-terminal section; belongs to the aldehyde dehydrogenase family. The protein in the C-terminal section; belongs to the iron-containing alcohol dehydrogenase family.

It carries out the reaction a primary alcohol + NAD(+) = an aldehyde + NADH + H(+). The catalysed reaction is a secondary alcohol + NAD(+) = a ketone + NADH + H(+). It catalyses the reaction an aldehyde + NAD(+) + H2O = a carboxylate + NADH + 2 H(+). In terms of biological role, has both aldehyde and alcohol dehydrogenase activities. Can use acetaldehyde, butyraldehyde, butanol and ethanol. This chain is Aldehyde-alcohol dehydrogenase, found in Clostridium acetobutylicum (strain ATCC 824 / DSM 792 / JCM 1419 / IAM 19013 / LMG 5710 / NBRC 13948 / NRRL B-527 / VKM B-1787 / 2291 / W).